The primary structure comprises 45 residues: Bomanin Short 2 (45 aa).

The first 20 residues, 1 to 20 (MKFFSVVTVFVFGLLALANA), serve as a signal peptide directing secretion. A propeptide spans 21 to 27 (VPLSPDP) (removed by a dipeptidylpeptidase). A disulfide bridge connects residues C36 and C39. G43 bears the Glycine amide mark.

In terms of tissue distribution, hemolymph (at protein level).

The protein localises to the secreted. In terms of biological role, secreted immune-induced peptide induced by Toll signaling. Has a role in resistance to bacterial and fungal infections. The chain is Bomanin Short 2 from Drosophila melanogaster (Fruit fly).